The sequence spans 378 residues: Cobalt-precorrin-5B C(1)-methyltransferase (378 aa).

This sequence belongs to the CbiD family.

The enzyme catalyses Co-precorrin-5B + S-adenosyl-L-methionine = Co-precorrin-6A + S-adenosyl-L-homocysteine. Its pathway is cofactor biosynthesis; adenosylcobalamin biosynthesis; cob(II)yrinate a,c-diamide from sirohydrochlorin (anaerobic route): step 6/10. Catalyzes the methylation of C-1 in cobalt-precorrin-5B to form cobalt-precorrin-6A. This chain is Cobalt-precorrin-5B C(1)-methyltransferase, found in Synechocystis sp. (strain ATCC 27184 / PCC 6803 / Kazusa).